We begin with the raw amino-acid sequence, 90 residues long: MAGFWSKIFGNDEKPSSAQTAKDRLKVIVASEQGLGRRLSQDKIDQMKKEIMQVVSRYVRGVDEDHIQMQVRSEANIEMLEMNINLPEER.

The tract at residues 1 to 21 (MAGFWSKIFGNDEKPSSAQTA) is disordered. A compositionally biased stretch (basic and acidic residues) spans 10–21 (GNDEKPSSAQTA).

The protein belongs to the MinE family.

Functionally, prevents the cell division inhibition by proteins MinC and MinD at internal division sites while permitting inhibition at polar sites. This ensures cell division at the proper site by restricting the formation of a division septum at the midpoint of the long axis of the cell. In Acinetobacter baylyi (strain ATCC 33305 / BD413 / ADP1), this protein is Cell division topological specificity factor.